The following is a 70-amino-acid chain: MPIVRLKENEPFEAALRRFKRTIEKTGLLTELRSREFYEKPTAERKRKHAAAVKRHYKRIRSQQLPPRLY.

Residues 40-70 (KPTAERKRKHAAAVKRHYKRIRSQQLPPRLY) are disordered. The span at 45-61 (RKRKHAAAVKRHYKRIR) shows a compositional bias: basic residues.

This sequence belongs to the bacterial ribosomal protein bS21 family.

This chain is Small ribosomal subunit protein bS21, found in Bordetella parapertussis (strain 12822 / ATCC BAA-587 / NCTC 13253).